The sequence spans 475 residues: MSPQTETKAGVGFKAGVKDYRLTYFTPDYETKDTDILAAFRMTPQPGVPPEEAGAAVAAESSTGTWTTVWTDGLTSLDRYKGRCYNIEPVAGEDNQFIAYVAYPLDLFEEGSVTNLFTSIVGNVFGFKALRALRLEDLRIPPAYSKTFIGPPHGIQVERDKLNKYGRPLLGCTIKPKLGLSAKNYGRAVYECLRGGLDFTKDDENVNSQPFMRWRDRFLFVAEALFKSQAETGEIKGHYLNATAGTCEEMLKRAVFARELGAPIVMHDYLTGGFTANTSLAFYCRDNGLLLHIHRAMHAVIDRQKNHGIHFRVLAKALRMSGGDHIHTGTVVGKLEGERDLTLGFVDLLRDDFIEKDRSRGIYFTQDWVSMPGVLPVASGGIHVWHMPALTEIFGDDSVLQFGGGTLGHPWGNAPGAVANRVAVEACVQARNEGRDLATEGNDIIREAAKWSPELAAACEVWKEIKFEYEAMDTL.

A propeptide spanning residues 1–2 (MS) is cleaved from the precursor. N-acetylproline is present on Pro3. Lys14 is subject to N6,N6,N6-trimethyllysine. 2 residues coordinate substrate: Asn123 and Thr173. Residue Lys175 is the Proton acceptor of the active site. A substrate-binding site is contributed by Lys177. The Mg(2+) site is built by Lys201, Asp203, and Glu204. Lys201 carries the N6-carboxylysine modification. His294 acts as the Proton acceptor in catalysis. The substrate site is built by Arg295, His327, and Ser379.

The protein belongs to the RuBisCO large chain family. Type I subfamily. In terms of assembly, heterohexadecamer of 8 large chains and 8 small chains; disulfide-linked. The disulfide link is formed within the large subunit homodimers. The cofactor is Mg(2+). Post-translationally, the disulfide bond which can form in the large chain dimeric partners within the hexadecamer appears to be associated with oxidative stress and protein turnover.

It localises to the plastid. It is found in the chloroplast. The enzyme catalyses 2 (2R)-3-phosphoglycerate + 2 H(+) = D-ribulose 1,5-bisphosphate + CO2 + H2O. It carries out the reaction D-ribulose 1,5-bisphosphate + O2 = 2-phosphoglycolate + (2R)-3-phosphoglycerate + 2 H(+). Functionally, ruBisCO catalyzes two reactions: the carboxylation of D-ribulose 1,5-bisphosphate, the primary event in carbon dioxide fixation, as well as the oxidative fragmentation of the pentose substrate in the photorespiration process. Both reactions occur simultaneously and in competition at the same active site. The sequence is that of Ribulose bisphosphate carboxylase large chain from Equisetum arvense (Field horsetail).